Consider the following 691-residue polypeptide: Protein phosphatase Slingshot homolog (691 aa).

A DEK-C domain is found at 236–291; the sequence is EETERIIKLKLRDILRESDLENITSKEVRSALEQHTLCALQDYKEFIDNEMIIILA. The Tyrosine-protein phosphatase domain occupies 295–436; it reads RPSEIFPYLY…LQTYQGILGA (142 aa). The Phosphocysteine intermediate role is filled by C380. Residues 532–580 adopt a coiled-coil conformation; it reads NEHVLSKEQIIQEEKKVMELEKGPEWVVKNNVLEEMKETEERELPNFEL. Positions 585 to 620 are disordered; it reads NQSRERDQETIKESSVITQGSSSLDEVFESSTPTRS. Over residues 587–596 the composition is skewed to basic and acidic residues; it reads SRERDQETIK. Polar residues predominate over residues 597–619; it reads ESSVITQGSSSLDEVFESSTPTR.

It belongs to the protein-tyrosine phosphatase family. As to quaternary structure, interacts with actin and this stimulates phosphatase activity.

It localises to the cytoplasm. The protein localises to the cytoskeleton. It is found in the cleavage furrow. The protein resides in the midbody. It carries out the reaction O-phospho-L-tyrosyl-[protein] + H2O = L-tyrosyl-[protein] + phosphate. The catalysed reaction is O-phospho-L-seryl-[protein] + H2O = L-seryl-[protein] + phosphate. It catalyses the reaction O-phospho-L-threonyl-[protein] + H2O = L-threonyl-[protein] + phosphate. Protein phosphatase which regulates actin filament dynamics. Dephosphorylates and activates the actin binding/depolymerizing factor cofilin, which subsequently binds to actin filaments and stimulates their disassembly. Required for completion of the gastrulation movement and for cytokinesis. This chain is Protein phosphatase Slingshot homolog (ssh), found in Xenopus laevis (African clawed frog).